The following is a 341-amino-acid chain: Ribosomal RNA small subunit methyltransferase H (341 aa).

Residues 47 to 49 (GGY), Asp-64, Phe-91, Asp-109, and Gln-116 contribute to the S-adenosyl-L-methionine site.

The protein belongs to the methyltransferase superfamily. RsmH family.

It is found in the cytoplasm. It carries out the reaction cytidine(1402) in 16S rRNA + S-adenosyl-L-methionine = N(4)-methylcytidine(1402) in 16S rRNA + S-adenosyl-L-homocysteine + H(+). In terms of biological role, specifically methylates the N4 position of cytidine in position 1402 (C1402) of 16S rRNA. The protein is Ribosomal RNA small subunit methyltransferase H of Rhizobium johnstonii (strain DSM 114642 / LMG 32736 / 3841) (Rhizobium leguminosarum bv. viciae).